A 498-amino-acid chain; its full sequence is Meiosis-specific nuclear structural protein 1 (498 aa).

Coiled-coil stretches lie at residues 45-211 (KSEE…FLKE), 270-348 (LAFA…QRLE), and 385-450 (DDRI…RQKI).

This sequence belongs to the MNS1 family.

It localises to the nucleus. Its subcellular location is the cytoplasm. It is found in the cytoskeleton. The protein resides in the cilium axoneme. The protein localises to the flagellum axoneme. Microtubule inner protein (MIP) part of the dynein-decorated doublet microtubules (DMTs) in cilia axoneme, which is required for motile cilia beating. May play a role in the control of meiotic division and germ cell differentiation through regulation of pairing and recombination during meiosis. Required for sperm flagella assembly. May play a role in the assembly and function of the outer dynein arm-docking complex (ODA-DC). ODA-DC mediates outer dynein arms (ODA) binding onto the axonemal doublet microtubules. The sequence is that of Meiosis-specific nuclear structural protein 1 (mns1) from Xenopus tropicalis (Western clawed frog).